The sequence spans 110 residues: Large ribosomal subunit protein uL22 (110 aa).

Belongs to the universal ribosomal protein uL22 family. Part of the 50S ribosomal subunit.

Its function is as follows. This protein binds specifically to 23S rRNA; its binding is stimulated by other ribosomal proteins, e.g. L4, L17, and L20. It is important during the early stages of 50S assembly. It makes multiple contacts with different domains of the 23S rRNA in the assembled 50S subunit and ribosome. In terms of biological role, the globular domain of the protein is located near the polypeptide exit tunnel on the outside of the subunit, while an extended beta-hairpin is found that lines the wall of the exit tunnel in the center of the 70S ribosome. This is Large ribosomal subunit protein uL22 from Mycoplasmopsis pulmonis (strain UAB CTIP) (Mycoplasma pulmonis).